Consider the following 276-residue polypeptide: Diaminopimelate epimerase (276 aa).

Asn13, Gln46, and Asn66 together coordinate substrate. The active-site Proton donor is Cys75. Substrate-binding positions include 76-77 (GN), Asn159, Asn192, and 210-211 (ER). Cys219 (proton acceptor) is an active-site residue. 220–221 (GT) is a substrate binding site.

The protein belongs to the diaminopimelate epimerase family. In terms of assembly, homodimer.

It localises to the cytoplasm. It catalyses the reaction (2S,6S)-2,6-diaminopimelate = meso-2,6-diaminopimelate. The protein operates within amino-acid biosynthesis; L-lysine biosynthesis via DAP pathway; DL-2,6-diaminopimelate from LL-2,6-diaminopimelate: step 1/1. In terms of biological role, catalyzes the stereoinversion of LL-2,6-diaminopimelate (L,L-DAP) to meso-diaminopimelate (meso-DAP), a precursor of L-lysine and an essential component of the bacterial peptidoglycan. The polypeptide is Diaminopimelate epimerase (Hahella chejuensis (strain KCTC 2396)).